Reading from the N-terminus, the 123-residue chain is Modulator protein MzrA (123 aa).

At 1 to 8 (MIKRPRWQ) the chain is on the cytoplasmic side. The chain crosses the membrane as a helical span at residues 9 to 29 (YVLLIALALLALATLLVPCMV). Residues 30-123 (RTESELRIRA…EFARAPLNLG (94 aa)) are Periplasmic-facing.

This sequence belongs to the MzrA family. Interacts with EnvZ.

The protein localises to the cell inner membrane. In terms of biological role, modulates the activity of the EnvZ/OmpR two-component regulatory system, probably by directly modulating EnvZ enzymatic activity and increasing stability of phosphorylated OmpR. In Serratia proteamaculans (strain 568), this protein is Modulator protein MzrA.